Reading from the N-terminus, the 309-residue chain is MSAASHIHSVACRLSSSFLASPKLKLHPRLSFFFHSSSFRNHIITRSVFCSSSHLSVRVSSYHSSVAAKATTSAMGDTATDAGMDAVQRRLMFEDECILVDENDHVVGHDTKYNCHLMEKIESDNLLHRAFSVFLFNSKYELLLQQRSATKVTFPLVWTNTCCSHPRYRESELVDENALGVRNAAQRKLLDELGIPAEDVPVDQFIPLGRMLYKAPSDGKWGEHELDYLLFIIRDVNVHPNPDEVADVKYVNQDQLKDLLRKVDAGEEGLKLSPWFRLVVENFLFKWWDHVEKGTLQDATDMKTIHKLT.

K112 is a substrate binding site. Mg(2+) is bound by residues H116 and H128. A Nudix hydrolase domain is found at 126–278; it reads LLHRAFSVFL…GLKLSPWFRL (153 aa). Residues R147 and K151 each coordinate substrate. The active site involves C163. S164 contacts substrate. 2 residues coordinate Mg(2+): E223 and E225. E225 is an active-site residue.

The protein belongs to the IPP isomerase type 1 family. Mg(2+) is required as a cofactor.

It catalyses the reaction isopentenyl diphosphate = dimethylallyl diphosphate. The protein operates within isoprenoid biosynthesis; dimethylallyl diphosphate biosynthesis; dimethylallyl diphosphate from isopentenyl diphosphate: step 1/1. It functions in the pathway porphyrin-containing compound metabolism; chlorophyll biosynthesis. Functionally, catalyzes the 1,3-allylic rearrangement of the homoallylic substrate isopentenyl (IPP) to its highly electrophilic allylic isomer, dimethylallyl diphosphate (DMAPP). The polypeptide is Isopentenyl-diphosphate Delta-isomerase II (IPI2) (Camptotheca acuminata (Happy tree)).